A 106-amino-acid polypeptide reads, in one-letter code: Small ribosomal subunit protein bS20 (106 aa).

Positions methionine 1–alanine 32 are enriched in basic residues. Positions methionine 1 to isoleucine 33 are disordered.

It belongs to the bacterial ribosomal protein bS20 family.

In terms of biological role, binds directly to 16S ribosomal RNA. In Thermus thermophilus (strain ATCC BAA-163 / DSM 7039 / HB27), this protein is Small ribosomal subunit protein bS20 (rpsT).